Consider the following 215-residue polypeptide: MERNKLARQIIDTCLEMTRLGLNQGTAGNVSVRYQDGMLITPTGIPYEKLTESHIVFIDGNGKHEEGKLPSSEWRFHMAAYQSRPDANAVVHNHAVHCTAVSILNRSIPAIHYMIAAAGGNSIPCAPYATFGTRELSEHVALALKNRKATLLQHHGLIACEVNLEKALWLAHEVEVLAQLYLTTLAITDPVPVLSDEEIAVVLEKFKTYGLRIEE.

Substrate contacts are provided by residues 28-29 (GN), 43-44 (TG), and 71-72 (SS). Catalysis depends on Glu73, which acts as the Proton donor/acceptor. Glu73, His92, His94, and His155 together coordinate Zn(2+).

It belongs to the aldolase class II family. AraD/FucA subfamily. As to quaternary structure, homotetramer. The cofactor is Zn(2+).

The catalysed reaction is L-fuculose 1-phosphate = (S)-lactaldehyde + dihydroxyacetone phosphate. Its pathway is carbohydrate degradation; L-fucose degradation; L-lactaldehyde and glycerone phosphate from L-fucose: step 3/3. Its activity is regulated as follows. Inhibited by phosphoglycolohydroxamate (PGH). Its function is as follows. Involved in the degradation of L-fucose and D-arabinose. Catalyzes the reversible cleavage of L-fuculose 1-phosphate (Fuc1P) to yield dihydroxyacetone phosphate (DHAP) and L-lactaldehyde. Also able to catalyze the reversible cleavage of D-ribulose 1-phosphate, but FucA has a higher affinity for L-fuculose 1-phosphate and L-lactaldehyde than for D-ribulose 1-phosphate and glycolaldehyde, respectively. FucA possesses a high specificity for the dihydroxyacetone phosphate (DHAP), but accepts a great variety of different aldehydes and has a strong preference for L-configurated alpha-hydroxy aldehydes. FucA generates a vicinal diol unit having the absolute (3R,4R)-cis configuration (D-erythro). The chain is L-fuculose phosphate aldolase from Escherichia coli (strain K12).